A 124-amino-acid chain; its full sequence is uncharacterized protein (124 aa).

In terms of biological role, not required for the biogenesis of c-type cytochromes. This is an uncharacterized protein from Rhodobacter capsulatus (strain ATCC BAA-309 / NBRC 16581 / SB1003).